We begin with the raw amino-acid sequence, 136 residues long: MLQPKRMKFRKMFKGRNRGLANGTEVSFGEFGLKAVGRGRLTARQIESARRAMTRHIKRQGQIWIRVFPDKPITSKPLEVRMGKGKGNVEYWVCQIQPGKVLYEMNGVSEELAREAFTLAAAKLPIKTTFVTKTVM.

Belongs to the universal ribosomal protein uL16 family. Part of the 50S ribosomal subunit.

Binds 23S rRNA and is also seen to make contacts with the A and possibly P site tRNAs. The sequence is that of Large ribosomal subunit protein uL16 from Shewanella loihica (strain ATCC BAA-1088 / PV-4).